A 252-amino-acid polypeptide reads, in one-letter code: NAD(P)H-quinone oxidoreductase subunit K (252 aa).

Cys-73, Cys-74, Cys-138, and Cys-169 together coordinate [4Fe-4S] cluster. The segment covering 225 to 236 (ASTQKQALSPSQ) has biased composition (polar residues). Residues 225 to 252 (ASTQKQALSPSQEIPLEDQNEATKEIAQ) form a disordered region.

The protein belongs to the complex I 20 kDa subunit family. As to quaternary structure, NDH-1 can be composed of about 15 different subunits; different subcomplexes with different compositions have been identified which probably have different functions. [4Fe-4S] cluster serves as cofactor.

Its subcellular location is the cellular thylakoid membrane. It carries out the reaction a plastoquinone + NADH + (n+1) H(+)(in) = a plastoquinol + NAD(+) + n H(+)(out). The enzyme catalyses a plastoquinone + NADPH + (n+1) H(+)(in) = a plastoquinol + NADP(+) + n H(+)(out). Its function is as follows. NDH-1 shuttles electrons from an unknown electron donor, via FMN and iron-sulfur (Fe-S) centers, to quinones in the respiratory and/or the photosynthetic chain. The immediate electron acceptor for the enzyme in this species is believed to be plastoquinone. Couples the redox reaction to proton translocation, and thus conserves the redox energy in a proton gradient. Cyanobacterial NDH-1 also plays a role in inorganic carbon-concentration. The sequence is that of NAD(P)H-quinone oxidoreductase subunit K from Prochlorococcus marinus (strain MIT 9211).